Consider the following 226-residue polypeptide: tRNA (guanine-N(7)-)-methyltransferase (226 aa).

S-adenosyl-L-methionine is bound by residues glutamate 59, glutamate 84, aspartate 111, and aspartate 134. Aspartate 134 is an active-site residue. Lysine 138 serves as a coordination point for substrate. The segment at 140–145 is interaction with RNA; it reads RHNKRR. Substrate is bound by residues aspartate 170 and 205-208; that span reads TKFE.

The protein belongs to the class I-like SAM-binding methyltransferase superfamily. TrmB family.

The catalysed reaction is guanosine(46) in tRNA + S-adenosyl-L-methionine = N(7)-methylguanosine(46) in tRNA + S-adenosyl-L-homocysteine. It participates in tRNA modification; N(7)-methylguanine-tRNA biosynthesis. Its function is as follows. Catalyzes the formation of N(7)-methylguanine at position 46 (m7G46) in tRNA. This is tRNA (guanine-N(7)-)-methyltransferase from Chromobacterium violaceum (strain ATCC 12472 / DSM 30191 / JCM 1249 / CCUG 213 / NBRC 12614 / NCIMB 9131 / NCTC 9757 / MK).